Consider the following 256-residue polypeptide: MADWDAEQYLKFEDERTRPARDLLAQIPLDDPRRVADIGCGPGNSTELLVRRWPQARVTGVDTSADMLRQARERLPGHNFIEANIAHWAPPVGTDVVFANAVFQWVPNHLKHMQRLVGALEPGGVLAVQMPDNLDEPSHIMMREVAFQEPWRHQLAEAAQLRDNLPKPGAYYDALRPLCSRLEIWHTVYNHVLDDAMAIVEWVKGTGLRPFIDPLELPERKAYLAAYTARIAAAYPPQADGKVLLRFPRLFVVAIK.

This sequence belongs to the methyltransferase superfamily. Tam family.

It is found in the cytoplasm. The catalysed reaction is trans-aconitate + S-adenosyl-L-methionine = (E)-3-(methoxycarbonyl)pent-2-enedioate + S-adenosyl-L-homocysteine. Functionally, catalyzes the S-adenosylmethionine monomethyl esterification of trans-aconitate. The protein is Trans-aconitate 2-methyltransferase of Rhodopseudomonas palustris (strain BisB18).